We begin with the raw amino-acid sequence, 148 residues long: FAD synthase (148 aa).

ATP is bound by residues 14–15 (VF), 19–22 (HAGH), and aspartate 100.

Belongs to the archaeal FAD synthase family. As to quaternary structure, homodimer. A divalent metal cation serves as cofactor.

The enzyme catalyses FMN + ATP + H(+) = FAD + diphosphate. It participates in cofactor biosynthesis; FAD biosynthesis; FAD from FMN: step 1/1. Its function is as follows. Catalyzes the transfer of the AMP portion of ATP to flavin mononucleotide (FMN) to produce flavin adenine dinucleotide (FAD) coenzyme. The sequence is that of FAD synthase from Pyrococcus horikoshii (strain ATCC 700860 / DSM 12428 / JCM 9974 / NBRC 100139 / OT-3).